We begin with the raw amino-acid sequence, 382 residues long: Sphingosine 1-phosphate receptor 1 (382 aa).

Residue Val-2 is modified to N-acetylvaline. Residues 2–46 (VSTSIPEVKALRSSVSDYGNYDIIVRHYNYTGKLNIGAEKDHGIK) lie on the Extracellular side of the membrane. Lys-10 carries the post-translational modification N6-acetyllysine. N-linked (GlcNAc...) asparagine glycosylation occurs at Asn-30. The chain crosses the membrane as a helical span at residues 47–68 (LTSVVFILICCFIILENIFVLL). Residues 69-82 (TIWKTKKFHRPMYY) lie on the Cytoplasmic side of the membrane. Residues 83–104 (FIGNLALSDLLAGVAYTANLLL) form a helical membrane-spanning segment. Residues 105 to 116 (SGATTYKLTPAQ) are Extracellular-facing. A helical membrane pass occupies residues 117-138 (WFLREGSMFVALSASVFSLLAI). 120–121 (RE) serves as a coordination point for sphing-4-enine 1-phosphate. The Cytoplasmic segment spans residues 139–160 (AIERYITMLKMKLHNGSNSSRS). Residues 161–182 (FLLISACWVISLILGGLPIMGW) form a helical membrane-spanning segment. At 183 to 196 (NCISSLSSCSTVLP) the chain is on the extracellular side. Residues Cys-184 and Cys-191 are joined by a disulfide bond. A helical membrane pass occupies residues 197-224 (LYHKHYILFCTTVFTLLLLSIVILYCRI). The Cytoplasmic portion of the chain corresponds to 225 to 257 (YSLVRTRSRRLTFRKNISKASRSSEKSLALLKT). At Thr-236 the chain carries Phosphothreonine. A helical transmembrane segment spans residues 258-278 (VIIVLSVFIACWAPLFILLLL). 265–269 (FIACW) lines the sphing-4-enine 1-phosphate pocket. The Extracellular portion of the chain corresponds to 279-289 (DVGCKAKTCDI). The cysteines at positions 282 and 287 are disulfide-linked. A helical membrane pass occupies residues 290 to 310 (LYKAEYFLVLAVLNSGTNPII). Topologically, residues 311–382 (YTLTNKEMRR…MSSGNVNSSS (72 aa)) are cytoplasmic. Cys-328 carries the S-palmitoyl cysteine lipid modification. Residues 348–382 (MEFSRSKSDNSSHPQKDDGDNPETIMSSGNVNSSS) are disordered. Phosphoserine is present on residues Ser-351 and Ser-353. Over residues 351-366 (SRSKSDNSSHPQKDDG) the composition is skewed to basic and acidic residues. Polar residues predominate over residues 371–382 (TIMSSGNVNSSS).

Belongs to the G-protein coupled receptor 1 family. Interacts with GNAI1 and GNAI3. Interacts with CD69; this interaction promotes S1PR1 degradation. In terms of processing, palmitoylated by ZDHHC5. Palmitoylation is required for targeting to plasma membrane, enabling G(i) coupling. As to expression, expressed in a wide variety of tissues with highest levels in brain, heart and spleen. Lower levels found in kidney, liver, lung, muscle, placenta, thymus, and uterus. Very low levels in intestine, stomach and testis. According to PubMed:9931453, expressed modestly in apparent endothelial cells surrounding some blood vessels (e.g. aortic trunk).

Its subcellular location is the cell membrane. It localises to the endosome. It is found in the membrane raft. Functionally, G-protein coupled receptor for the bioactive lysosphingolipid sphingosine 1-phosphate (S1P) that seems to be coupled to the G(i) subclass of heteromeric G proteins. Signaling leads to the activation of RAC1, SRC, PTK2/FAK1 and MAP kinases. Plays an important role in cell migration, probably via its role in the reorganization of the actin cytoskeleton and the formation of lamellipodia in response to stimuli that increase the activity of the sphingosine kinase SPHK1. Required for normal chemotaxis toward sphingosine 1-phosphate. Required for normal embryonic heart development and normal cardiac morphogenesis. Plays an important role in the regulation of sprouting angiogenesis and vascular maturation. Inhibits sprouting angiogenesis to prevent excessive sprouting during blood vessel development. Required for normal egress of mature T-cells from the thymus into the blood stream and into peripheral lymphoid organs. Plays a role in the migration of osteoclast precursor cells, the regulation of bone mineralization and bone homeostasis. Plays a role in responses to oxidized 1-palmitoyl-2-arachidonoyl-sn-glycero-3-phosphocholine by pulmonary endothelial cells and in the protection against ventilator-induced lung injury. The sequence is that of Sphingosine 1-phosphate receptor 1 from Mus musculus (Mouse).